Reading from the N-terminus, the 241-residue chain is Ribosomal RNA large subunit methyltransferase E (241 aa).

The S-adenosyl-L-methionine site is built by G88, W90, D111, D127, and D151. Residue K191 is the Proton acceptor of the active site.

Belongs to the class I-like SAM-binding methyltransferase superfamily. RNA methyltransferase RlmE family.

Its subcellular location is the cytoplasm. It carries out the reaction uridine(2552) in 23S rRNA + S-adenosyl-L-methionine = 2'-O-methyluridine(2552) in 23S rRNA + S-adenosyl-L-homocysteine + H(+). Functionally, specifically methylates the uridine in position 2552 of 23S rRNA at the 2'-O position of the ribose in the fully assembled 50S ribosomal subunit. This chain is Ribosomal RNA large subunit methyltransferase E, found in Bartonella quintana (strain Toulouse) (Rochalimaea quintana).